The chain runs to 78 residues: uncharacterized protein (78 aa).

Residues 20 to 78 (LQDLFPPHFGNEEADEDDEDGDKYGDDDGEFYGDNDGDNDGDNDGVNDGVGDGPPSTLL) are disordered. Acidic residues predominate over residues 31 to 64 (EEADEDDEDGDKYGDDDGEFYGDNDGDNDGDNDG).

This is an uncharacterized protein from Dictyostelium discoideum (Social amoeba).